A 192-amino-acid polypeptide reads, in one-letter code: dTTP/UTP pyrophosphatase (192 aa).

The active-site Proton acceptor is D71.

Belongs to the Maf family. YhdE subfamily. The cofactor is a divalent metal cation.

Its subcellular location is the cytoplasm. It carries out the reaction dTTP + H2O = dTMP + diphosphate + H(+). The catalysed reaction is UTP + H2O = UMP + diphosphate + H(+). In terms of biological role, nucleoside triphosphate pyrophosphatase that hydrolyzes dTTP and UTP. May have a dual role in cell division arrest and in preventing the incorporation of modified nucleotides into cellular nucleic acids. The sequence is that of dTTP/UTP pyrophosphatase from Pseudoalteromonas atlantica (strain T6c / ATCC BAA-1087).